The following is a 21-amino-acid chain: Peptidyl-prolyl cis-trans isomerase (21 aa).

The interval 1–21 is disordered; that stretch reads ENFKIKHTEPGLLSMANAGKN.

It belongs to the cyclophilin-type PPIase family. PPIase A subfamily.

It carries out the reaction [protein]-peptidylproline (omega=180) = [protein]-peptidylproline (omega=0). In terms of biological role, PPIases accelerate the folding of proteins. It catalyzes the cis-trans isomerization of proline imidic peptide bonds in oligopeptides. The protein is Peptidyl-prolyl cis-trans isomerase of Naegleria fowleri (Brain eating amoeba).